The primary structure comprises 511 residues: Bifunctional purine biosynthesis protein PurH (511 aa).

Residues 1–145 (MKKRALVSVS…KNHKFVSVIV (145 aa)) form the MGS-like domain.

This sequence belongs to the PurH family.

The catalysed reaction is (6R)-10-formyltetrahydrofolate + 5-amino-1-(5-phospho-beta-D-ribosyl)imidazole-4-carboxamide = 5-formamido-1-(5-phospho-D-ribosyl)imidazole-4-carboxamide + (6S)-5,6,7,8-tetrahydrofolate. It carries out the reaction IMP + H2O = 5-formamido-1-(5-phospho-D-ribosyl)imidazole-4-carboxamide. It participates in purine metabolism; IMP biosynthesis via de novo pathway; 5-formamido-1-(5-phospho-D-ribosyl)imidazole-4-carboxamide from 5-amino-1-(5-phospho-D-ribosyl)imidazole-4-carboxamide (10-formyl THF route): step 1/1. Its pathway is purine metabolism; IMP biosynthesis via de novo pathway; IMP from 5-formamido-1-(5-phospho-D-ribosyl)imidazole-4-carboxamide: step 1/1. In Bacillus anthracis (strain A0248), this protein is Bifunctional purine biosynthesis protein PurH.